A 77-amino-acid chain; its full sequence is Large ribosomal subunit protein bL28 (77 aa).

Positions 1-25 (MARVCQVTGKAPMSGNNVSHANNKT) are disordered.

This sequence belongs to the bacterial ribosomal protein bL28 family.

The polypeptide is Large ribosomal subunit protein bL28 (Paraburkholderia phytofirmans (strain DSM 17436 / LMG 22146 / PsJN) (Burkholderia phytofirmans)).